The chain runs to 391 residues: Formate-dependent phosphoribosylglycinamide formyltransferase (391 aa).

N(1)-(5-phospho-beta-D-ribosyl)glycinamide-binding positions include 20–21 and glutamate 80; that span reads EL. Residues arginine 112, lysine 153, 158–163, 193–196, and glutamate 201 each bind ATP; these read SSGKGQ and EGFI. The ATP-grasp domain occupies 117 to 306; that stretch reads RLAAEDLQIP…EFALHVRAFL (190 aa). The Mg(2+) site is built by glutamate 265 and glutamate 277. N(1)-(5-phospho-beta-D-ribosyl)glycinamide is bound by residues aspartate 284, lysine 354, and 361–362; that span reads RR.

This sequence belongs to the PurK/PurT family. As to quaternary structure, homodimer.

It carries out the reaction N(1)-(5-phospho-beta-D-ribosyl)glycinamide + formate + ATP = N(2)-formyl-N(1)-(5-phospho-beta-D-ribosyl)glycinamide + ADP + phosphate + H(+). The protein operates within purine metabolism; IMP biosynthesis via de novo pathway; N(2)-formyl-N(1)-(5-phospho-D-ribosyl)glycinamide from N(1)-(5-phospho-D-ribosyl)glycinamide (formate route): step 1/1. Functionally, involved in the de novo purine biosynthesis. Catalyzes the transfer of formate to 5-phospho-ribosyl-glycinamide (GAR), producing 5-phospho-ribosyl-N-formylglycinamide (FGAR). Formate is provided by PurU via hydrolysis of 10-formyl-tetrahydrofolate. The chain is Formate-dependent phosphoribosylglycinamide formyltransferase from Photobacterium profundum (strain SS9).